The primary structure comprises 1119 residues: Leucine-rich repeats and immunoglobulin-like domains protein 3 (1119 aa).

The signal sequence occupies residues 1-24; it reads MSAPSLRARAAGLGLLLCAVLGRA. The region spanning 38–74 is the LRRNT domain; the sequence is PSGVAAERPCPTTCRCLGDLLDCSRKRLARLPEPLPS. LRR repeat units follow at residues 75–96, 99–120, 122–142, 146–167, 168–189, 193–214, 216–237, 240–261, 264–285, 288–309, 312–333, 336–357, 360–382, 387–408, and 411–432; these read WVAR…SMSH, SLRE…GPVS, NITL…EHLK, SLET…FPAL, QLKY…YFDN, TLLV…MFKL, QLQH…TFQG, ALKS…AFWG, NMEI…WLYG, MLQE…AWEF, KLSE…SFLG, LLNT…AFRG, SLKT…NGAF, KLRR…AFTG, and ALEH…AFSQ. N-linked (GlcNAc...) asparagine glycosylation is found at asparagine 122 and asparagine 156. N-linked (GlcNAc...) asparagine glycosylation occurs at asparagine 274. Asparagine 442, asparagine 469, and asparagine 515 each carry an N-linked (GlcNAc...) asparagine glycan. Positions 444–495 constitute an LRRCT domain; that stretch reads SSLLCDCQLKWLPQWVAENNFQSFVNASCAHPQLLKGRSIFAVSPDGFVCDD. 3 Ig-like C2-type domains span residues 499–598, 603–692, and 697–783; these read PQIT…AKLT, PSFT…ATLT, and PSFL…VRLS. Cystine bridges form between cysteine 520-cysteine 581 and cysteine 624-cysteine 676. 2 N-linked (GlcNAc...) asparagine glycosylation sites follow: asparagine 688 and asparagine 729. Cysteine 718 and cysteine 767 are oxidised to a cystine. The helical transmembrane segment at 810–830 threads the bilayer; sequence VVIIAVVCCVVGTSLVWVVII. Residues asparagine 905, asparagine 987, asparagine 999, and asparagine 1016 are each glycosylated (N-linked (GlcNAc...) asparagine). Residues 1073–1093 form a disordered region; the sequence is SSPDLDSGSEEDGKERTDFQE. The span at 1083 to 1093 shows a compositional bias: basic and acidic residues; sequence EDGKERTDFQE.

As to quaternary structure, interacts with EGFR, ERBB2 and ERBB4 (in vitro). In terms of tissue distribution, widely expressed.

It localises to the cell membrane. The protein resides in the cytoplasmic vesicle membrane. May play a role in craniofacial and inner ear morphogenesis during embryonic development. May act within the otic vesicle epithelium to control formation of the lateral semicircular canal in the inner ear, possibly by restricting the expression of NTN1. This Homo sapiens (Human) protein is Leucine-rich repeats and immunoglobulin-like domains protein 3 (LRIG3).